An 88-amino-acid chain; its full sequence is HssA/B-like protein 13 (88 aa).

It belongs to the hssA/B family.

The chain is HssA/B-like protein 13 (hssl13) from Dictyostelium discoideum (Social amoeba).